Reading from the N-terminus, the 154-residue chain is MCQSNQIVSHFLSHRNVTNELAEKISKDHYSYKPAETSMSAEELVKHILTSFHLFANVIKEGNASPFQNKQEETETDLNVLAKTYTEKTVAILEQLTEEQLDREIDLTSAFGRKVTGRALLQLAMEHEIHHKGNLFVYVREMGHTELPFYQQRM.

Positions 47, 127, and 131 each coordinate a divalent metal cation. Tyrosine 150 is subject to Phosphotyrosine.

It belongs to the DinB family. As to quaternary structure, homodimer.

This is an uncharacterized protein from Bacillus subtilis (strain 168).